Reading from the N-terminus, the 417-residue chain is Calreticulin (417 aa).

The first 17 residues, methionine 1–alanine 17, serve as a signal peptide directing secretion. The interval glutamate 18 to glutamate 197 is N-domain. Glutamine 26 serves as a coordination point for Ca(2+). Position 48 is an N6-acetyllysine (lysine 48). Residues lysine 62 and lysine 64 each contribute to the Ca(2+) site. The residue at position 64 (lysine 64) is an N6-(2-hydroxyisobutyryl)lysine. Cysteine 105 and cysteine 137 are oxidised to a cystine. Residues tyrosine 109, lysine 111, tyrosine 128, and aspartate 135 each coordinate an alpha-D-glucoside. Lysine 159 carries the N6-acetyllysine modification. The stretch at valine 191 to phenylalanine 202 is one 1-1 repeat. Positions valine 191–glutamate 255 are 4 X approximate repeats. The interval serine 193 to arginine 278 is disordered. Residues aspartate 198–tyrosine 308 form a P-domain region. Basic and acidic residues predominate over residues lysine 207–glutamate 251. An N6-acetyllysine modification is found at lysine 209. Repeat copies occupy residues aspartate 210–glutamate 221, aspartate 227–lysine 238, aspartate 244–glutamate 255, glycine 259–proline 269, glycine 273–proline 283, and glycine 287–proline 297. Residues aspartate 237–glutamate 270 form an interaction with PPIB region. Positions aspartate 252–tryptophan 261 are enriched in acidic residues. Residues glycine 259–proline 297 form a 3 X approximate repeats region. The segment at aspartate 309–leucine 417 is C-domain. An an alpha-D-glucoside-binding site is contributed by aspartate 317. Residue aspartate 328 participates in Ca(2+) binding. Asparagine 344 is a glycosylation site (N-linked (GlcNAc...) asparagine). The disordered stretch occupies residues threonine 350–leucine 417. Over residues alanine 352 to glutamate 379 the composition is skewed to basic and acidic residues. Positions glutamate 380–valine 409 are enriched in acidic residues. Residues lysine 414–leucine 417 carry the Prevents secretion from ER motif.

The protein belongs to the calreticulin family. Monomer. Component of an EIF2 complex at least composed of CELF1/CUGBP1, CALR, CALR3, EIF2S1, EIF2S2, HSP90B1 and HSPA5. Interacts with PDIA3/ERp57 and SPACA9. Interacts with TRIM21. Interacts with NR3C1. Interacts with PPIB. Interacts (via P-domain) with PDIA5. Interacts with GABARAP. Interacts with HLA-E-B2M and HLA-G-B2M complexes. Interacts with HLA-F. Interacts with CLCC1.

Its subcellular location is the endoplasmic reticulum lumen. The protein resides in the cytoplasm. The protein localises to the cytosol. It localises to the secreted. It is found in the extracellular space. Its subcellular location is the extracellular matrix. The protein resides in the cell surface. The protein localises to the sarcoplasmic reticulum lumen. It localises to the cytoplasmic vesicle. It is found in the secretory vesicle. Its subcellular location is the cortical granule. The protein resides in the cytolytic granule. Its function is as follows. Calcium-binding chaperone that promotes folding, oligomeric assembly and quality control in the endoplasmic reticulum (ER) via the calreticulin/calnexin cycle. This lectin interacts transiently with almost all of the monoglucosylated glycoproteins that are synthesized in the ER. Interacts with the DNA-binding domain of NR3C1 and mediates its nuclear export. Involved in maternal gene expression regulation. May participate in oocyte maturation via the regulation of calcium homeostasis. Present in the cortical granules of non-activated oocytes, is exocytosed during the cortical reaction in response to oocyte activation and might participate in the block to polyspermy. In Homo sapiens (Human), this protein is Calreticulin.